The chain runs to 156 residues: SsrA-binding protein (156 aa).

Positions 135-150 are enriched in basic and acidic residues; the sequence is KRDTIKDREWQRDRSR. The tract at residues 135 to 156 is disordered; it reads KRDTIKDREWQRDRSRIMKKNT.

This sequence belongs to the SmpB family.

Its subcellular location is the cytoplasm. Required for rescue of stalled ribosomes mediated by trans-translation. Binds to transfer-messenger RNA (tmRNA), required for stable association of tmRNA with ribosomes. tmRNA and SmpB together mimic tRNA shape, replacing the anticodon stem-loop with SmpB. tmRNA is encoded by the ssrA gene; the 2 termini fold to resemble tRNA(Ala) and it encodes a 'tag peptide', a short internal open reading frame. During trans-translation Ala-aminoacylated tmRNA acts like a tRNA, entering the A-site of stalled ribosomes, displacing the stalled mRNA. The ribosome then switches to translate the ORF on the tmRNA; the nascent peptide is terminated with the 'tag peptide' encoded by the tmRNA and targeted for degradation. The ribosome is freed to recommence translation, which seems to be the essential function of trans-translation. The chain is SsrA-binding protein from Legionella pneumophila (strain Corby).